The chain runs to 442 residues: Cytokine receptor-like factor 3 (442 aa).

A coiled-coil region spans residues Glu-10–Glu-46. One can recognise a Fibronectin type-III domain in the interval Pro-181 to Pro-274.

This sequence belongs to the cytokine receptor-like factor 3 family.

The protein localises to the cytoplasm. Its function is as follows. May play a role in the negative regulation of cell cycle progression. The chain is Cytokine receptor-like factor 3 (Crlf3) from Mus musculus (Mouse).